The chain runs to 141 residues: S-adenosylmethionine decarboxylase proenzyme (141 aa).

Serine 63 serves as the catalytic Schiff-base intermediate with substrate; via pyruvic acid. Serine 63 carries the pyruvic acid (Ser); by autocatalysis modification. The Proton acceptor; for processing activity role is filled by histidine 68. Cysteine 83 functions as the Proton donor; for catalytic activity in the catalytic mechanism.

The protein belongs to the prokaryotic AdoMetDC family. Type 1 subfamily. In terms of assembly, heterotetramer of two alpha and two beta chains arranged as a dimer of alpha/beta heterodimers. Requires pyruvate as cofactor. Post-translationally, is synthesized initially as an inactive proenzyme. Formation of the active enzyme involves a self-maturation process in which the active site pyruvoyl group is generated from an internal serine residue via an autocatalytic post-translational modification. Two non-identical subunits are generated from the proenzyme in this reaction, and the pyruvate is formed at the N-terminus of the alpha chain, which is derived from the carboxyl end of the proenzyme. The post-translation cleavage follows an unusual pathway, termed non-hydrolytic serinolysis, in which the side chain hydroxyl group of the serine supplies its oxygen atom to form the C-terminus of the beta chain, while the remainder of the serine residue undergoes an oxidative deamination to produce ammonia and the pyruvoyl group blocking the N-terminus of the alpha chain.

The enzyme catalyses S-adenosyl-L-methionine + H(+) = S-adenosyl 3-(methylsulfanyl)propylamine + CO2. It participates in amine and polyamine biosynthesis; S-adenosylmethioninamine biosynthesis; S-adenosylmethioninamine from S-adenosyl-L-methionine: step 1/1. In terms of biological role, catalyzes the decarboxylation of S-adenosylmethionine to S-adenosylmethioninamine (dcAdoMet), the propylamine donor required for the synthesis of the polyamines spermine and spermidine from the diamine putrescine. The chain is S-adenosylmethionine decarboxylase proenzyme from Thermococcus onnurineus (strain NA1).